Consider the following 451-residue polypeptide: Exodeoxyribonuclease 7 large subunit (451 aa).

It belongs to the XseA family. In terms of assembly, heterooligomer composed of large and small subunits.

It is found in the cytoplasm. It catalyses the reaction Exonucleolytic cleavage in either 5'- to 3'- or 3'- to 5'-direction to yield nucleoside 5'-phosphates.. Functionally, bidirectionally degrades single-stranded DNA into large acid-insoluble oligonucleotides, which are then degraded further into small acid-soluble oligonucleotides. This is Exodeoxyribonuclease 7 large subunit from Neisseria meningitidis serogroup A / serotype 4A (strain DSM 15465 / Z2491).